We begin with the raw amino-acid sequence, 888 residues long: Alanine--tRNA ligase (888 aa).

Zn(2+) is bound by residues histidine 564, histidine 568, cysteine 676, and histidine 680.

It belongs to the class-II aminoacyl-tRNA synthetase family. It depends on Zn(2+) as a cofactor.

It localises to the cytoplasm. The catalysed reaction is tRNA(Ala) + L-alanine + ATP = L-alanyl-tRNA(Ala) + AMP + diphosphate. Its function is as follows. Catalyzes the attachment of alanine to tRNA(Ala) in a two-step reaction: alanine is first activated by ATP to form Ala-AMP and then transferred to the acceptor end of tRNA(Ala). Also edits incorrectly charged Ser-tRNA(Ala) and Gly-tRNA(Ala) via its editing domain. The chain is Alanine--tRNA ligase from Bartonella quintana (strain Toulouse) (Rochalimaea quintana).